The chain runs to 1068 residues: Receptor-like protein 13 (1068 aa).

Residues 1–23 (MEGKLFLGQYLICVILLLGQLHG) form the signal peptide. Over 24-986 (YKSCIEKERK…EADESTVDME (963 aa)) the chain is Extracellular. N-linked (GlcNAc...) asparagine glycosylation is found at N59 and N97. LRR repeat units follow at residues 104 to 129 (FEDV…LFDD), 139 to 162 (LRNL…FLNA), 164 to 187 (TSLT…EFKD), 188 to 212 (LTNL…DYNS), 216 to 239 (FRKL…FLNS), 241 to 264 (TSLK…ELRD), 265 to 290 (LTNV…LFAL), 292 to 315 (KLKA…KFAK), 325 to 349 (WKNM…LTSL), 350 to 373 (TGLR…LANL), 375 to 397 (SLEY…LLAN), 398 to 423 (LSKL…SWKP), 424 to 447 (KFQL…LLHQ), 448 to 471 (KDLH…LLEN), 472 to 497 (NTKL…AHNL), 499 to 517 (FLNV…NFGW), 519 to 543 (LPHL…LDNM), 544 to 567 (KSIE…FLKG), and 569 to 594 (YNLT…NFTR). N153 carries an N-linked (GlcNAc...) asparagine glycan. An N-linked (GlcNAc...) asparagine glycan is attached at N202. A glycan (N-linked (GlcNAc...) asparagine) is linked at N279. N397 carries an N-linked (GlcNAc...) asparagine glycan. N471, N482, and N501 each carry an N-linked (GlcNAc...) asparagine glycan. 2 N-linked (GlcNAc...) asparagine glycosylation sites follow: N570 and N591. One copy of the LRR 20; degenerate repeat lies at 596 to 615 (WVMSMDNNLFTGNIGKGFRS). LRR repeat units follow at residues 616-639 (LPSL…WIGE), 641-664 (QGLF…LFNI), 665-688 (SYLQ…VSSI), 690-710 (HGAV…DTLL), and 711-734 (LNVI…INTQ). The N-linked (GlcNAc...) asparagine glycan is linked to N663. N700 carries an N-linked (GlcNAc...) asparagine glycan. N-linked (GlcNAc...) asparagine glycosylation is found at N735, N745, N771, N780, and N822. LRR repeat units lie at residues 736–757 (ISIL…FCSL) and 758–781 (SNIQ…LSNT). LRR repeat units lie at residues 846 to 870 (LKLL…LGGL), 871 to 893 (VELE…SFSG), 895 to 918 (KNVE…LTDM), and 920 to 943 (SLAV…QFNT). N877 and N882 each carry an N-linked (GlcNAc...) asparagine glycan. Residues N925 and N930 are each glycosylated (N-linked (GlcNAc...) asparagine). Residues 987-1007 (SFYWSFVAAYVTILLGILASL) traverse the membrane as a helical segment. Residues 1008 to 1068 (SFDSPWSRAW…PPALFHKTRT (61 aa)) lie on the Cytoplasmic side of the membrane.

The protein belongs to the RLP family.

The protein resides in the cell membrane. The sequence is that of Receptor-like protein 13 from Arabidopsis thaliana (Mouse-ear cress).